Consider the following 318-residue polypeptide: Protein RecA (318 aa).

Position 53 to 60 (53 to 60) interacts with ATP; that stretch reads GPESSGKT.

Belongs to the RecA family.

The protein resides in the cytoplasm. Can catalyze the hydrolysis of ATP in the presence of single-stranded DNA, the ATP-dependent uptake of single-stranded DNA by duplex DNA, and the ATP-dependent hybridization of homologous single-stranded DNAs. It interacts with LexA causing its activation and leading to its autocatalytic cleavage. This chain is Protein RecA, found in Bacteroides fragilis (strain YCH46).